We begin with the raw amino-acid sequence, 323 residues long: Fructose-1,6-bisphosphatase class 1 (323 aa).

Mg(2+)-binding residues include Glu90, Asp111, Leu113, and Asp114. Residues 114–117, Tyr222, and Lys253 contribute to the substrate site; that span reads DGSS. Glu259 is a Mg(2+) binding site.

Belongs to the FBPase class 1 family. As to quaternary structure, homotetramer. The cofactor is Mg(2+).

It is found in the cytoplasm. It catalyses the reaction beta-D-fructose 1,6-bisphosphate + H2O = beta-D-fructose 6-phosphate + phosphate. The protein operates within carbohydrate biosynthesis; gluconeogenesis. This is Fructose-1,6-bisphosphatase class 1 from Pelobacter propionicus (strain DSM 2379 / NBRC 103807 / OttBd1).